Consider the following 623-residue polypeptide: Translation initiation factor IF-2 (623 aa).

A compositionally biased stretch (low complexity) spans 1 to 18 (MTLNKKTNNENSSKTTPK). 2 disordered regions span residues 1–21 (MTLN…KLSK) and 92–115 (PQKE…KLQA). The tr-type G domain occupies 125-293 (KTPPIVTIMG…ILLFSEIQNL (169 aa)). A G1 region spans residues 134-141 (GHVDHGKT). 134–141 (GHVDHGKT) provides a ligand contact to GTP. Positions 159-163 (GITQH) are G2. The tract at residues 180–183 (DTPG) is G3. Residues 180-184 (DTPGH) and 234-237 (NKVD) contribute to the GTP site. A G4 region spans residues 234 to 237 (NKVD). The tract at residues 270–272 (SAL) is G5.

The protein belongs to the TRAFAC class translation factor GTPase superfamily. Classic translation factor GTPase family. IF-2 subfamily.

Its subcellular location is the cytoplasm. Functionally, one of the essential components for the initiation of protein synthesis. Protects formylmethionyl-tRNA from spontaneous hydrolysis and promotes its binding to the 30S ribosomal subunits. Also involved in the hydrolysis of GTP during the formation of the 70S ribosomal complex. This is Translation initiation factor IF-2 from Aster yellows witches'-broom phytoplasma (strain AYWB).